Consider the following 296-residue polypeptide: MIKLKRLSDKPVLMPKAENEWERAAVFNTAAIYDNGLFHLIYRATDIGPHAKYGKYISRLGYAVSKDGINFMRLDKPVMSNETEQELRGLEDPRIVKIDGIYYMMYTGFGDRFQDDYRICLATSKNLIDWERKGVVLDEPNKDASLFPEKINGKYVMLHRRYPDIWIAFSDDLKNWYDHKPILKPIPNTWESARVGIGGPPIKTKDGWFLIYHAADDNNVYRLGAVLLDLEDPSKVIARQKEPILEPELGWEKEGYIPNVVFSCGNAVKDDTIYVYYGGADTVIGVAILEMKDIKF.

The protein belongs to the glycosyl hydrolase 130 family. As to quaternary structure, homodimer.

It catalyses the reaction [(1-&gt;2)-beta-D-mannosyl](n) + phosphate = [(1-&gt;2)-beta-D-mannosyl](n-1) + alpha-D-mannose 1-phosphate. It participates in nucleotide-sugar biosynthesis; GDP-alpha-D-mannose biosynthesis. Its function is as follows. Probably involved in a salvage pathway for GDP-D-mannose biosynthesis. Catalyzes the reversible phosphorolysis of 1,2-beta-oligomannan. In phosphorolytic reactions, prefers 1,2-beta-oligomannan with a degree of polymerization (DP) of 3, 4 and 5. Produces alpha-D-mannose 1-phosphate, which is the precursor of GDP-D-mannose. The polypeptide is 1,2-beta-oligomannan phosphorylase (Thermoanaerobacter sp. (strain X514)).